Here is a 651-residue protein sequence, read N- to C-terminus: Coronin-like protein (651 aa).

WD repeat units lie at residues 79 to 110 (GHTA…GIWD), 138 to 169 (GHAR…KLWN), 180 to 210 (KHPD…RVWN), and 226 to 257 (AKNQ…GIWD). A disordered region spans residues 408–609 (APSFHEAKRP…TSPKSLGLKK (202 aa)). Residues 427 to 451 (LEEKKEQPKVEKPISESEKEVKQEA) show a composition bias toward basic and acidic residues. Residues S441, S454, and S456 each carry the phosphoserine modification. Over residues 452–465 (PKSPSPLKSASSSS) the composition is skewed to low complexity. Residues T517 and T529 each carry the phosphothreonine modification. 2 stretches are compositionally biased toward basic and acidic residues: residues 523-540 (ETKK…ELKP) and 547-572 (TDRK…EQEK). A phosphoserine mark is found at S573 and S579. Residues 578–590 (SSITAAKTAITAS) are compositionally biased toward low complexity. A coiled-coil region spans residues 618 to 650 (VLQLEDVVDKLTKANLDKDERLLKLEQKIGELS).

Belongs to the WD repeat coronin family. In terms of assembly, binds to F-actin.

This Saccharomyces cerevisiae (strain ATCC 204508 / S288c) (Baker's yeast) protein is Coronin-like protein (CRN1).